The sequence spans 199 residues: Holliday junction branch migration complex subunit RuvA (199 aa).

The interval 1-64 is domain I; that stretch reads MIAKLTGRLD…EDFLRLLGFA (64 aa). The segment at 65–143 is domain II; the sequence is RAEERDWFRL…ALGGISGSGP (79 aa). The tract at residues 144–146 is flexible linker; the sequence is ALS. A domain III region spans residues 147 to 199; that stretch reads AAAGPVGDAIAALTGLGFKPGEASAAVAAANEELGADASLDALVRVALKKAAK.

It belongs to the RuvA family. As to quaternary structure, homotetramer. Forms an RuvA(8)-RuvB(12)-Holliday junction (HJ) complex. HJ DNA is sandwiched between 2 RuvA tetramers; dsDNA enters through RuvA and exits via RuvB. An RuvB hexamer assembles on each DNA strand where it exits the tetramer. Each RuvB hexamer is contacted by two RuvA subunits (via domain III) on 2 adjacent RuvB subunits; this complex drives branch migration. In the full resolvosome a probable DNA-RuvA(4)-RuvB(12)-RuvC(2) complex forms which resolves the HJ.

The protein localises to the cytoplasm. The RuvA-RuvB-RuvC complex processes Holliday junction (HJ) DNA during genetic recombination and DNA repair, while the RuvA-RuvB complex plays an important role in the rescue of blocked DNA replication forks via replication fork reversal (RFR). RuvA specifically binds to HJ cruciform DNA, conferring on it an open structure. The RuvB hexamer acts as an ATP-dependent pump, pulling dsDNA into and through the RuvAB complex. HJ branch migration allows RuvC to scan DNA until it finds its consensus sequence, where it cleaves and resolves the cruciform DNA. This Sphingopyxis alaskensis (strain DSM 13593 / LMG 18877 / RB2256) (Sphingomonas alaskensis) protein is Holliday junction branch migration complex subunit RuvA.